Consider the following 147-residue polypeptide: Microsomal glutathione S-transferase 2 (147 aa).

A run of 3 helical transmembrane segments spans residues 6–26 (ILLAAVSILSACQQSYFALQV), 59–79 (FYPIFIITLWMAGWYFNQVFA), and 111–131 (SLGILALLTLLGALGIANSFL).

The protein belongs to the MAPEG family. As to quaternary structure, homotrimer. In terms of tissue distribution, liver, spleen, skeletal muscle, heart, adrenals, pancreas, prostate, testis, fetal liver, and fetal spleen. Very low expression in lung, brain, placenta and bone marrow. Abundantly expressed in human umbilical vein endothelial cells (at protein level).

Its subcellular location is the endoplasmic reticulum membrane. The protein resides in the microsome membrane. It carries out the reaction RX + glutathione = an S-substituted glutathione + a halide anion + H(+). It catalyses the reaction 1-chloro-2,4-dinitrobenzene + glutathione = 2,4-dinitrophenyl-S-glutathione + chloride + H(+). The enzyme catalyses leukotriene C4 = leukotriene A4 + glutathione. The catalysed reaction is (5S)-hydroperoxy-(6E,8Z,11Z,14Z)-eicosatetraenoate + 2 glutathione = (5S)-hydroxy-(6E,8Z,11Z,14Z)-eicosatetraenoate + glutathione disulfide + H2O. With respect to regulation, each monomer can bind on GSH molecule but only one subunit is catalytically active. Functionally, catalyzes several different glutathione-dependent reactions. Catalyzes the glutathione-dependent reduction of lipid hydroperoxides, such as 5-HPETE. Has glutathione transferase activity, toward xenobiotic electrophiles, such as 1-chloro-2, 4-dinitrobenzene (CDNB). Also catalyzes the conjugation of leukotriene A4 with reduced glutathione to form leukotriene C4 (LTC4). Involved in oxidative DNA damage induced by ER stress and anticancer agents by activating LTC4 biosynthetic machinery in nonimmune cells. The polypeptide is Microsomal glutathione S-transferase 2 (MGST2) (Homo sapiens (Human)).